Reading from the N-terminus, the 1588-residue chain is Multicopy suppressor of chk1 protein 1 (1588 aa).

Positions 38–60 (HAKPSTQQQQQQQNISNETTSTG) are disordered. Positions 51 to 60 (NISNETTSTG) are enriched in polar residues. In terms of domain architecture, JmjN spans 82–124 (NVRVTPKKEEFSRGLDFISDLYDQTARKSGAVRVIPPDNWKCP). The segment at 298 to 345 (KCKLCAQEGSSLVTCCICQSNYHYACVEAPFAPFSDIHYWTCNSCIPS) adopts a PHD-type 1 zinc-finger fold. The span at 385–395 (PLTLPSNTKTP) shows a compositional bias: polar residues. Positions 385-412 (PLTLPSNTKTPPASARQSSRRTRSTSGK) are disordered. The 171-residue stretch at 475 to 645 (FPTSRQNAYY…DMHAENSFNM (171 aa)) folds into the JmjC domain. The disordered stretch occupies residues 848–872 (EKRKPKRGSATHSHLESPSEEVEDL). Residues 1171-1220 (FHYCFCRQPEAGMMIECELCHEWYHAKCMKMSKKKLRADEKFICPICDYR) form a PHD-type 2 zinc finger. The disordered stretch occupies residues 1319–1341 (APQPPPFIGESRSNRKPRPTKRQ). The PHD-type 3 zinc finger occupies 1454-1505 (SVICLCRQPFAISDGTVQCHNCLEWFHYECVGLSSDIVSTLSNYACPDCCSK).

Its subcellular location is the nucleus. Functionally, has a role in regulating chromatin structure via global deacetylation of histone H3. This function is associated with the activity of a histone deacetylase. The chain is Multicopy suppressor of chk1 protein 1 (msc1) from Schizosaccharomyces pombe (strain 972 / ATCC 24843) (Fission yeast).